We begin with the raw amino-acid sequence, 183 residues long: MADAARARRLAKRIAAIVASAIEYEIKDPGLAGVTITDAKVTADLHDATVYYTVMGRTLHDEPNCAGAAAALERAKGVLRTKVGAGTGVRFTPTLTFTLDTISDSVHRMDELLARARAADADLARVRVGAKPAGEADPYRDNGSVAQSPAPGGLGIRTSDGPEAVEAPLTCGGDTGDDDRPKE.

Residues 132-183 form a disordered region; it reads PAGEADPYRDNGSVAQSPAPGGLGIRTSDGPEAVEAPLTCGGDTGDDDRPKE.

Belongs to the RbfA family. As to quaternary structure, monomer. Binds 30S ribosomal subunits, but not 50S ribosomal subunits or 70S ribosomes.

It is found in the cytoplasm. One of several proteins that assist in the late maturation steps of the functional core of the 30S ribosomal subunit. Associates with free 30S ribosomal subunits (but not with 30S subunits that are part of 70S ribosomes or polysomes). Required for efficient processing of 16S rRNA. May interact with the 5'-terminal helix region of 16S rRNA. This is Ribosome-binding factor A from Mycobacterium tuberculosis (strain ATCC 25177 / H37Ra).